The following is a 255-amino-acid chain: Thiazole synthase (255 aa).

The active-site Schiff-base intermediate with DXP is Lys-96. Residues Gly-157, 183 to 184, and 205 to 206 contribute to the 1-deoxy-D-xylulose 5-phosphate site; these read AG and NT.

It belongs to the ThiG family. In terms of assembly, homotetramer. Forms heterodimers with either ThiH or ThiS.

The protein localises to the cytoplasm. It catalyses the reaction [ThiS sulfur-carrier protein]-C-terminal-Gly-aminoethanethioate + 2-iminoacetate + 1-deoxy-D-xylulose 5-phosphate = [ThiS sulfur-carrier protein]-C-terminal Gly-Gly + 2-[(2R,5Z)-2-carboxy-4-methylthiazol-5(2H)-ylidene]ethyl phosphate + 2 H2O + H(+). It functions in the pathway cofactor biosynthesis; thiamine diphosphate biosynthesis. Its function is as follows. Catalyzes the rearrangement of 1-deoxy-D-xylulose 5-phosphate (DXP) to produce the thiazole phosphate moiety of thiamine. Sulfur is provided by the thiocarboxylate moiety of the carrier protein ThiS. In vitro, sulfur can be provided by H(2)S. The chain is Thiazole synthase from Geobacillus thermodenitrificans (strain NG80-2).